The following is a 489-amino-acid chain: Aklavinone 12-hydroxylase DnrF (489 aa).

FAD contacts are provided by residues 17–18 (LG), Glu-37, Gln-121, and Leu-145. Catalysis depends on Tyr-224, which acts as the Proton acceptor. Asp-308 lines the FAD pocket. Residue Gly-317 participates in aklavinone binding. Disordered regions lie at residues 402–428 (VAAE…RAPH) and 455–489 (EGGA…PPAN). Low complexity predominate over residues 468–482 (RIWASASTSISSAAM).

Belongs to the PheA/TfdB FAD monooxygenase family. As to quaternary structure, monomer. It depends on FAD as a cofactor.

It catalyses the reaction aklavinone + NADPH + O2 + H(+) = epsilon-rhodomycinone + NADP(+) + H2O. Its pathway is antibiotic biosynthesis; daunorubicin biosynthesis. It participates in antibiotic biosynthesis; carminomycin biosynthesis. The protein operates within antibiotic biosynthesis; rhodomycin biosynthesis. Involved in the biosynthesis of the anthracyclines carminomycin, rhodomycin and daunorubicin (daunomycin) which are aromatic polyketide antibiotics that exhibit high cytotoxicity and are widely applied in the chemotherapy of a variety of cancers. Catalyzes the incorporation of a hydroxyl group at position C-11 of aklavinone, resulting in epsilon-rhodomycinone. It cannot accept substrates glycosylated at position C-7. It can also hydroxylate 11-deoxycarminomycinone and can use both NAD or NADP. This Streptomyces peucetius protein is Aklavinone 12-hydroxylase DnrF (dnrF).